Here is a 325-residue protein sequence, read N- to C-terminus: Phosphate import ATP-binding protein PstB (325 aa).

The 242-residue stretch at 79-320 folds into the ABC transporter domain; it reads IDNYNLWYSN…PNNEKTKDYI (242 aa). 111–118 is an ATP binding site; that stretch reads GPSGCGKS.

It belongs to the ABC transporter superfamily. Phosphate importer (TC 3.A.1.7) family. The complex is composed of two ATP-binding proteins (PstB), two transmembrane proteins (PstC and PstA) and a solute-binding protein (PstS).

It is found in the cell membrane. It carries out the reaction phosphate(out) + ATP + H2O = ADP + 2 phosphate(in) + H(+). Functionally, part of the ABC transporter complex PstSACB involved in phosphate import. Responsible for energy coupling to the transport system. The sequence is that of Phosphate import ATP-binding protein PstB from Mycoplasmoides gallisepticum (strain R(low / passage 15 / clone 2)) (Mycoplasma gallisepticum).